A 204-amino-acid chain; its full sequence is MGSRDHLFKVLVVGDAAVGKTSLVQRYSQDSFSKHYKSTVGVDFALKVLQWSDSEMVRLQLWDIAGQERFTSMTRLYYRDASACVIMFDVTNATTFSNSQRWKQDLDSKLTLPSGEPVPCLLLANKSDLSPWAVSRDQIDRFSKENGFTGWTETSVKENKNINEAMRVLVEKMMNNSREDVMSLSTQGNYINLQAKPSSGWTCC.

GTP contacts are provided by Ser-33, Lys-34, His-35, Tyr-36, Lys-37, and Thr-39. The short motif at 36 to 44 (YKSTVGVDF) is the Effector region element. Thr-71 carries the phosphothreonine; by LRRK2 modification. Ser-72 is subject to Phosphoserine. Lys-126, Val-156, and Lys-157 together coordinate GTP. Residues Cys-203 and Cys-204 are each lipidated (S-geranylgeranyl cysteine).

It belongs to the small GTPase superfamily. Rab family. As to quaternary structure, interacts with LRRK2 (via the N-terminus); this interaction is direct and stimulates kinase activity.

It is found in the cell membrane. It localises to the cytoplasm. The protein localises to the perinuclear region. The protein resides in the golgi apparatus. Its subcellular location is the golgi apparatus membrane. It is found in the trans-Golgi network. It localises to the cytoskeleton. Its function is as follows. The small GTPases Rab are key regulators in vesicle trafficking. Essential for maintaining the integrity of endosome-trans-Golgi network structure. Together with LRRK2, plays a role in the retrograde trafficking pathway for recycling proteins, such as mannose 6 phosphate receptor (M6PR), between lysosomes and the Golgi apparatus in a retromer-dependent manner. Recruits LRRK2 to the Golgi apparatus and stimulates LRRK2 kinase activity. Stimulates phosphorylation of RAB10 'Thr-73' by LRRK2. Also regulates neuronal process morphology in the intact central nervous system (CNS). This Mus musculus (Mouse) protein is Ras-related protein Rab-7L1 (Rab29).